Reading from the N-terminus, the 268-residue chain is Ribosomal RNA small subunit methyltransferase A (268 aa).

S-adenosyl-L-methionine-binding residues include N12, L14, G38, E59, D82, and N107.

This sequence belongs to the class I-like SAM-binding methyltransferase superfamily. rRNA adenine N(6)-methyltransferase family. RsmA subfamily.

It is found in the cytoplasm. It catalyses the reaction adenosine(1518)/adenosine(1519) in 16S rRNA + 4 S-adenosyl-L-methionine = N(6)-dimethyladenosine(1518)/N(6)-dimethyladenosine(1519) in 16S rRNA + 4 S-adenosyl-L-homocysteine + 4 H(+). Specifically dimethylates two adjacent adenosines (A1518 and A1519) in the loop of a conserved hairpin near the 3'-end of 16S rRNA in the 30S particle. May play a critical role in biogenesis of 30S subunits. This is Ribosomal RNA small subunit methyltransferase A from Aster yellows witches'-broom phytoplasma (strain AYWB).